The sequence spans 529 residues: MLLAALCCLLWSFRTSAGHFPRACASSKSLMEKECCPAWTGDSSPCGQLSGRGACQDITLSKAPLGPQYPFTGMDDREAWPSVFYNRTCQCFGNFMGFNCGNCKFGFWGPNCTEKRLLVRRNIFDLSVPEKNKFLAYLTLAKHTISPDYVIPIGTYGQMNNGSTPMFNDINVYDLFVWMHYYVSRDTLLGGSEIWKDIDFAHEAPGFLPWHRLFLLLWEQEIQKLTGDENFTIPYWDWRDAKSCDICTDEYMGGHNPANPNLLSPASFFSSWQIICTRLEEYNSRQALCDGTPRGPLLRNPGHDKARTPRLPSSADVEFCLSLTQYESDSMDKAANFSFRNTLEGFASPLTGIADASQSSMHNALHIYMNGTMSQVQGSANDPIFLLHHAFVDSIFEQWLRRHHPLQEVYPEANAPIGHNRESYMVPFIPLYRNGDFFISSRDLGYDYSNLQDSERDIFQDYIKPFLEQASRIWPWLIGAAVVGSVLTAVLGRLTSLLCRRKRKQLREERQPLLMEKEDYHSLLYQTHV.

An N-terminal signal peptide occupies residues 1 to 18; that stretch reads MLLAALCCLLWSFRTSAG. Residues 19–472 lie on the Lumenal side of the membrane; the sequence is HFPRACASSK…IKPFLEQASR (454 aa). N-linked (GlcNAc...) asparagine glycans are attached at residues N86, N111, and N161. Cu cation contacts are provided by H180, H202, and H211. N-linked (GlcNAc...) asparagine glycosylation is found at N230 and N336. The Cu cation site is built by H362 and H366. Residue N370 is glycosylated (N-linked (GlcNAc...) asparagine). Residue H389 participates in Cu cation binding. Residues 473–495 traverse the membrane as a helical segment; it reads IWPWLIGAAVVGSVLTAVLGRLT. Residues 496–529 are Cytoplasmic-facing; it reads SLLCRRKRKQLREERQPLLMEKEDYHSLLYQTHV.

Belongs to the tyrosinase family. Forms an OPN3-dependent complex with DCT in response to blue light in melanocytes. Cu(2+) serves as cofactor. Glycosylated.

It is found in the melanosome membrane. The protein localises to the melanosome. The enzyme catalyses 2 L-dopa + O2 = 2 L-dopaquinone + 2 H2O. The catalysed reaction is L-tyrosine + O2 = L-dopaquinone + H2O. It catalyses the reaction 2 5,6-dihydroxyindole-2-carboxylate + O2 = 2 indole-5,6-quinone-2-carboxylate + 2 H2O. Its function is as follows. This is a copper-containing oxidase that functions in the formation of pigments such as melanins and other polyphenolic compounds. Catalyzes the initial and rate limiting step in the cascade of reactions leading to melanin production from tyrosine. In addition to hydroxylating tyrosine to DOPA (3,4-dihydroxyphenylalanine), also catalyzes the oxidation of DOPA to DOPA-quinone, and possibly the oxidation of DHI (5,6-dihydroxyindole) to indole-5,6 quinone. The protein is Tyrosinase (TYR) of Felis catus (Cat).